The primary structure comprises 459 residues: Cysteine--tRNA ligase (459 aa).

Cysteine 31 is a Zn(2+) binding site. The short motif at 33–43 (PTVYDNPHIGN) is the 'HIGH' region element. Residues cysteine 216, histidine 241, and glutamate 245 each coordinate Zn(2+). The 'KMSKS' region signature appears at 274 to 278 (KMSKS). Lysine 277 contributes to the ATP binding site.

Belongs to the class-I aminoacyl-tRNA synthetase family. Monomer. The cofactor is Zn(2+).

It localises to the cytoplasm. The enzyme catalyses tRNA(Cys) + L-cysteine + ATP = L-cysteinyl-tRNA(Cys) + AMP + diphosphate. The polypeptide is Cysteine--tRNA ligase (Rickettsia massiliae (strain Mtu5)).